Consider the following 285-residue polypeptide: NADH-cytochrome b5 reductase 1 (285 aa).

Residues 7–23 form a helical membrane-spanning segment; the sequence is LATFSVLVLFYKLFTYS. Residues 40–144 enclose the FAD-binding FR-type domain; sequence TEFREFELVE…SGPRGFYEYV (105 aa). Residues 124-139 and 150-182 contribute to the FAD site; these read GDMK…GPRG and HLAM…RVTL.

Belongs to the flavoprotein pyridine nucleotide cytochrome reductase family. Monomer. Component of the 2-(3-amino-3-carboxypropyl)histidine synthase complex composed of DPH1, DPH2, DPH3 and a NADH-dependent reductase, predominantly CBR1. It depends on FAD as a cofactor.

It is found in the mitochondrion outer membrane. It carries out the reaction 2 Fe(III)-[cytochrome b5] + NADH = 2 Fe(II)-[cytochrome b5] + NAD(+) + H(+). The catalysed reaction is 2 Fe(3+)-[Dph3] + NADH = 2 Fe(2+)-[Dph3] + NAD(+) + H(+). It functions in the pathway protein modification; peptidyl-diphthamide biosynthesis. NADH-dependent reductase for DPH3 and cytochrome b5. Required for the first step of diphthamide biosynthesis, a post-translational modification of histidine which occurs in elongation factor 2. DPH1 and DPH2 transfer a 3-amino-3-carboxypropyl (ACP) group from S-adenosyl-L-methionine (SAM) to a histidine residue, the reaction is assisted by a reduction system comprising DPH3 and a NADH-dependent reductase, predominantly CBR1. By reducing DPH3, also involved in the formation of the tRNA wobble base modification mcm5s 2U (5-methoxycarbonylmethyl-2-thiouridine), mediated by the elongator complex. The cytochrome b5/NADH cytochrome b5 reductase electron transfer system supports the catalytic activity of several sterol biosynthetic enzymes. The protein is NADH-cytochrome b5 reductase 1 (CBR1) of Candida glabrata (strain ATCC 2001 / BCRC 20586 / JCM 3761 / NBRC 0622 / NRRL Y-65 / CBS 138) (Yeast).